The primary structure comprises 92 residues: Large ribosomal subunit protein bL28 (92 aa).

Belongs to the bacterial ribosomal protein bL28 family.

This is Large ribosomal subunit protein bL28 from Borrelia hermsii (strain HS1 / DAH).